Reading from the N-terminus, the 533-residue chain is Multicopper oxidase CueO (533 aa).

A signal peptide (tat-type signal) is located at residues 1 to 28 (MHRRDFLKLTAALGAATSLPLWSRAALA). Plastocyanin-like domains lie at 53-166 (QTGS…IDDS), 221-290 (PYPQ…DTRD), and 416-532 (AFNF…FTVS). Residues histidine 102, histidine 104, histidine 142, and histidine 144 each coordinate Cu cation. The Cu cation site is built by histidine 458, histidine 461, histidine 463, histidine 514, cysteine 515, histidine 516, and histidine 520.

Belongs to the multicopper oxidase family. As to quaternary structure, monomer. The cofactor is Cu cation. Post-translationally, predicted to be exported by the Tat system. The position of the signal peptide cleavage has not been experimentally proven.

The protein resides in the periplasm. It carries out the reaction 4 Cu(+) + O2 + 4 H(+) = 4 Cu(2+) + 2 H2O. In terms of biological role, multicopper oxidase involved in copper homeostasis and copper tolerance under aerobic conditions. Is responsible for the oxidation of Cu(+) to the less harmful Cu(2+) in the periplasm, thereby preventing Cu(+) from entering the cytoplasm. The protein is Multicopper oxidase CueO (cueO) of Yersinia pestis.